We begin with the raw amino-acid sequence, 349 residues long: Arginine kinase (349 aa).

Residues 3–85 (DLAELWEKVS…LGPVILDYHK (83 aa)) form the Phosphagen kinase N-terminal domain. Residue 58-62 (GVGVY) coordinates substrate. A Phosphagen kinase C-terminal domain is found at 113-349 (WIVSTRVRVG…EEIIKLEKAA (237 aa)). ATP is bound by residues 116-120 (STRVR) and histidine 179. Glutamate 219 contacts substrate. Position 223 (arginine 223) interacts with ATP. Residue cysteine 265 coordinates substrate. Residues 274–278 (RASVH) and 302–307 (RGIHGE) each bind ATP. Glutamate 307 provides a ligand contact to substrate.

This sequence belongs to the ATP:guanido phosphotransferase family.

The enzyme catalyses L-arginine + ATP = N(omega)-phospho-L-arginine + ADP + H(+). This chain is Arginine kinase, found in Liolophura japonica (Chiton).